Consider the following 394-residue polypeptide: MTRGALKVTILLVGLGLVLAGSRPISDCGERIEDDGYPMERHEVVTSDNYILTMHRIPYSPKTGESSNRPVAFLMHGMLSSSSDWVLMGPERSLAYMLADAGYDVWMGNARGNTYSKAHKYWPTYWQIFWNFSWNEIGMYDVPAMIDYVLAKTGQQQVQYVGHSQGTTVYLVMVSERPEYNDKIKSAHLLGPAAYMGNMKSPLTRAFAPILGQPNAIVEVCGSMEFMPSNKFKQDLGIEMCQATSPYADMCANEIFLIGGYDTEQLDYELLEHIKATSPAGASVNQNLHFCQEYNSGKFRKFDYTALRNPYEYGSYFPPDYKLKNAKAPVLLYYGANDWMCDVSDVRKLRDELPNMALDYLVPFEKWAHLDFIWGTEARKYVYDEVLKQMQSYE.

An N-terminal signal peptide occupies residues 1–20 (MTRGALKVTILLVGLGLVLA). N131 is a glycosylation site (N-linked (GlcNAc...) asparagine). Catalysis depends on charge relay system residues S164 and H369.

The protein belongs to the AB hydrolase superfamily. Lipase family. Fat body.

This Drosophila melanogaster (Fruit fly) protein is Lipase 3 (Lip3).